The primary structure comprises 337 residues: DNA-directed RNA polymerase subunit alpha (337 aa).

The interval 1–233 (MVREKVKVST…NLFIPFLHVE (233 aa)) is alpha N-terminal domain (alpha-NTD). Residues 267–337 (LAFQYIFIDQ…IEKAFQKKID (71 aa)) are alpha C-terminal domain (alpha-CTD).

The protein belongs to the RNA polymerase alpha chain family. In terms of assembly, in plastids the minimal PEP RNA polymerase catalytic core is composed of four subunits: alpha, beta, beta', and beta''. When a (nuclear-encoded) sigma factor is associated with the core the holoenzyme is formed, which can initiate transcription.

The protein localises to the plastid. Its subcellular location is the chloroplast. It carries out the reaction RNA(n) + a ribonucleoside 5'-triphosphate = RNA(n+1) + diphosphate. Its function is as follows. DNA-dependent RNA polymerase catalyzes the transcription of DNA into RNA using the four ribonucleoside triphosphates as substrates. This Arabis hirsuta (Hairy rock-cress) protein is DNA-directed RNA polymerase subunit alpha.